A 503-amino-acid polypeptide reads, in one-letter code: Probable cytosol aminopeptidase (503 aa).

Positions 274 and 279 each coordinate Mn(2+). Residue Lys-286 is part of the active site. The Mn(2+) site is built by Asp-297, Asp-356, and Glu-358. The active site involves Arg-360.

The protein belongs to the peptidase M17 family. Mn(2+) is required as a cofactor.

It localises to the cytoplasm. The enzyme catalyses Release of an N-terminal amino acid, Xaa-|-Yaa-, in which Xaa is preferably Leu, but may be other amino acids including Pro although not Arg or Lys, and Yaa may be Pro. Amino acid amides and methyl esters are also readily hydrolyzed, but rates on arylamides are exceedingly low.. It catalyses the reaction Release of an N-terminal amino acid, preferentially leucine, but not glutamic or aspartic acids.. Its function is as follows. Presumably involved in the processing and regular turnover of intracellular proteins. Catalyzes the removal of unsubstituted N-terminal amino acids from various peptides. This is Probable cytosol aminopeptidase from Burkholderia lata (strain ATCC 17760 / DSM 23089 / LMG 22485 / NCIMB 9086 / R18194 / 383).